We begin with the raw amino-acid sequence, 442 residues long: PCI domain-containing protein C1105.07c (442 aa).

The PCI domain occupies 224–415; the sequence is VTFRYYLGRC…STLVLKKDPS (192 aa).

It is found in the cytoplasm. The protein resides in the nucleus envelope. In Schizosaccharomyces pombe (strain 972 / ATCC 24843) (Fission yeast), this protein is PCI domain-containing protein C1105.07c.